We begin with the raw amino-acid sequence, 133 residues long: Small ribosomal subunit protein uS8 (133 aa).

The protein belongs to the universal ribosomal protein uS8 family. In terms of assembly, part of the 30S ribosomal subunit. Contacts proteins S5 and S12.

In terms of biological role, one of the primary rRNA binding proteins, it binds directly to 16S rRNA central domain where it helps coordinate assembly of the platform of the 30S subunit. This is Small ribosomal subunit protein uS8 from Leptospira interrogans serogroup Icterohaemorrhagiae serovar copenhageni (strain Fiocruz L1-130).